We begin with the raw amino-acid sequence, 176 residues long: 4-hydroxylaminobenzoate lyase (176 aa).

This sequence belongs to the PnbB family.

The enzyme catalyses 4-hydroxylaminobenzoate + H2O + H(+) = 3,4-dihydroxybenzoate + NH4(+). Lyase involved in the degradation of nitroaromatic compounds. Catalyzes the conversion of 4-hydroxylaminobenzoate to 3,4-dihydroxybenzoate (protocatechuate). Required for the catabolism of 4-nitrotoluene. In Pseudomonas putida (Arthrobacter siderocapsulatus), this protein is 4-hydroxylaminobenzoate lyase.